The primary structure comprises 200 residues: NAD(P)H dehydrogenase (quinone) (200 aa).

Residues 4–191 (VLVLYYSSYG…DIARYQGKHV (188 aa)) form the Flavodoxin-like domain. FMN is bound by residues 10–15 (SSYGHV) and 79–81 (TRF). Y12 is a binding site for NAD(+). W99 lines the substrate pocket. FMN is bound by residues 114–120 (STGTQHG) and H135.

The protein belongs to the WrbA family. The cofactor is FMN.

It catalyses the reaction a quinone + NADH + H(+) = a quinol + NAD(+). The enzyme catalyses a quinone + NADPH + H(+) = a quinol + NADP(+). This chain is NAD(P)H dehydrogenase (quinone), found in Burkholderia orbicola (strain MC0-3).